The primary structure comprises 194 residues: Adenylate kinase isoenzyme 1 (194 aa).

Residue methionine 1 is modified to N-acetylmethionine. 18-23 is an ATP binding site; it reads GSGKGT. Serine 38 carries the post-translational modification Phosphoserine. The interval 38-67 is NMP; it reads STGDLLRSEVSSGSARGKKLSEIMEKGQLV. AMP contacts are provided by residues threonine 39, arginine 44, 65–67, 94–97, and glutamine 101; these read QLV and GYPR. Residues 131–141 are LID; the sequence is KRGETSGRVDD. Arginine 132 contributes to the ATP binding site. 2 residues coordinate AMP: arginine 138 and arginine 149. Glycine 177 serves as a coordination point for ATP.

The protein belongs to the adenylate kinase family. AK1 subfamily. As to quaternary structure, monomer. Mg(2+) serves as cofactor.

Its subcellular location is the cytoplasm. The enzyme catalyses a ribonucleoside 5'-phosphate + ATP = a ribonucleoside 5'-diphosphate + ADP. It carries out the reaction AMP + ATP = 2 ADP. It catalyses the reaction dAMP + ATP = dADP + ADP. The catalysed reaction is dATP + AMP = dADP + ADP. The enzyme catalyses dAMP + dATP = 2 dADP. It carries out the reaction a 2'-deoxyribonucleoside 5'-diphosphate + ATP = a 2'-deoxyribonucleoside 5'-triphosphate + ADP. It catalyses the reaction a ribonucleoside 5'-diphosphate + ATP = a ribonucleoside 5'-triphosphate + ADP. The catalysed reaction is CDP + GTP = CTP + GDP. The enzyme catalyses GDP + ATP = GTP + ADP. It carries out the reaction UDP + ATP = UTP + ADP. It catalyses the reaction GTP + UDP = UTP + GDP. The catalysed reaction is dTDP + GTP = dTTP + GDP. The enzyme catalyses dCDP + GTP = dCTP + GDP. It carries out the reaction dGDP + ATP = dGTP + ADP. It catalyses the reaction dADP + GTP = dATP + GDP. The catalysed reaction is thiamine diphosphate + ADP = thiamine triphosphate + AMP. Its function is as follows. Catalyzes the reversible transfer of the terminal phosphate group between ATP and AMP. Also displays broad nucleoside diphosphate kinase activity. Plays an important role in cellular energy homeostasis and in adenine nucleotide metabolism. Also catalyzes at a very low rate the synthesis of thiamine triphosphate (ThTP) from thiamine diphosphate (ThDP) and ADP. The polypeptide is Adenylate kinase isoenzyme 1 (Homo sapiens (Human)).